An 861-amino-acid chain; its full sequence is Glucans biosynthesis glucosyltransferase H (861 aa).

Helical transmembrane passes span 142–162 (FILL…MKGI), 188–208 (VLPY…FCWV), 516–536 (VFLT…FLVL), 573–593 (LFST…MLIW), 600–620 (FGGV…SVLL), and 683–703 (FLWW…VSVI).

This sequence belongs to the glycosyltransferase 2 family. OpgH subfamily.

It localises to the cell inner membrane. It participates in glycan metabolism; osmoregulated periplasmic glucan (OPG) biosynthesis. Functionally, involved in the biosynthesis of osmoregulated periplasmic glucans (OPGs). The polypeptide is Glucans biosynthesis glucosyltransferase H (Pseudomonas aeruginosa (strain UCBPP-PA14)).